The sequence spans 793 residues: MGRKLDPTKKEKRGPGRKARKQKGAETELVRFLPAAGDENSKRLSSRARKRAAKRRAGSVDVPKPNKSPGIKTLPGELSKGAVQARGKKRPAPIQNSDGDEEEDSGEDDVVTQGDLWGSEDSDEDMVDDYGAASNSEDEEEKLLPIERAALKQKAQDATAGVLWNEEDTDEDEDDDGVSPESHPRKDDKAEGDLQINVEDEEAFVLPPAGETDQDGQAPDLQRVHKRIQDIVGVLRDFGAQREEGRSRAEYLSRLQKDLATYYSYGDFLLSKLMELFPLSELIEFLEANEVPRPITLRTNTLKTRRRDLAQLLINRGVNLDPLGKWSKSGLVVYDSSVPIGATPEYLAGHYMLQGASSMLPVMALAPQEHERILDMCCAPGGKTSYIAQLMKNTGVILANDANADRLKSVVGNLHRLGVTNTIISHYDGRQFPKVVGGFDRVLLDAPCSGTGVISKDPAVKTNKDEKDIQRCAHLQKELLLSAIDSVNAASKTGGYLVYCTCSITVEENEWVVDYALKKRNVRLVPTGLDFGQEGFTRFQARRFHPTLRSTRRFYPHTHNMDGFFIAKFKKFSNSIPQPHAGNSAAATPTEPDLKDQVTPKSENGSQPTKKARGAVKAKQQLLRQPHSKKPFQKLNGIAKGPGLSTEPSVPDAQVSTRPSQSAGNADVNSKRKRSEKLKQRGPKWKPSKEAAVPKPSAPSRVEDSGTPVPTPSEIRAAPRPKDCAPSLGKAKKKQKGKQQLAQQPANGAAPLKEDAVSKGPSAPFVSPHSSTRPPPAKRRKSMTKGNSQPLLS.

The disordered stretch occupies residues 1 to 194 (MGRKLDPTKK…RKDDKAEGDL (194 aa)). Positions 1–355 (MGRKLDPTKK…YLAGHYMLQG (355 aa)) are N-terminal domain. Composition is skewed to basic residues over residues 10-22 (KEKRGPGRKARKQ) and 44-57 (LSSRARKRAAKRRA). Positions 25–57 (AETELVRFLPAAGDENSKRLSSRARKRAAKRRA) are interaction with NPM1. Residues 41–58 (SKRLSSRARKRAAKRRAG) carry the Nucleolar localization signal motif. 2 positions are modified to phosphoserine: serine 59 and serine 68. Residue lysine 72 forms a Glycyl lysine isopeptide (Lys-Gly) (interchain with G-Cter in SUMO2) linkage. Arginine 86 bears the Citrulline mark. Acidic residues-rich tracts occupy residues 98–110 (DGDEEEDSGEDDV) and 118–128 (GSEDSDEDMVD). Arginine 148 is modified (citrulline). Over residues 165–178 (NEEDTDEDEDDDGV) the composition is skewed to acidic residues. At threonine 169 the chain carries Phosphothreonine. Position 179 is a phosphoserine (serine 179). Residues 182 to 192 (SHPRKDDKAEG) are compositionally biased toward basic and acidic residues. Lysine 257 participates in a covalent cross-link: Glycyl lysine isopeptide (Lys-Gly) (interchain with G-Cter in SUMO2). Residues 356-579 (ASSMLPVMAL…KKFSNSIPQP (224 aa)) are catalytic domain. S-adenosyl-L-methionine is bound by residues 377-383 (CCAPGGK), aspartate 401, aspartate 428, and aspartate 445. Residue cysteine 502 is the Nucleophile of the active site. The segment at 576 to 793 (IPQPHAGNSA…TKGNSQPLLS (218 aa)) is disordered. Residues 580–793 (HAGNSAAATP…TKGNSQPLLS (214 aa)) are C-terminal domain. Over residues 599-609 (TPKSENGSQPT) the composition is skewed to polar residues. Lysine 601 participates in a covalent cross-link: Glycyl lysine isopeptide (Lys-Gly) (interchain with G-Cter in SUMO2). Residue lysine 634 is modified to N6-acetyllysine. Serine 649 carries the phosphoserine modification. The segment covering 654–668 (QVSTRPSQSAGNADV) has biased composition (polar residues). Residues 671-686 (KRKRSEKLKQRGPKWK) show a composition bias toward basic residues. Residues serine 713, serine 767, serine 782, and serine 793 each carry the phosphoserine modification. Residues 784–793 (TKGNSQPLLS) show a composition bias toward polar residues.

This sequence belongs to the class I-like SAM-binding methyltransferase superfamily. RsmB/NOP family. As to quaternary structure, interacts with MCRS1. Interacts with WDR46. Interacts with RRP1B. Interacts with NPM1, NOP56, FBL, RUVBL1 and NUFIP1. Post-translationally, citrullinated by PADI4.

It localises to the nucleus. Its subcellular location is the nucleolus. It carries out the reaction a cytidine in 28S rRNA + S-adenosyl-L-methionine = a 5-methylcytidine in 28S rRNA + S-adenosyl-L-homocysteine + H(+). Its function is as follows. S-adenosyl-L-methionine-dependent methyltransferase that specifically methylates the C(5) position of cytosine 4447 in 28S rRNA. Required for efficient rRNA processing and 60S ribosomal subunit biogenesis. Regulates pre-rRNA processing through non-catalytic complex formation with box C/D snoRNAs and facilitates the recruitment of U3 and U8 snoRNAs to pre-90S ribosomal particles and their stable assembly into snoRNP complexes. May play a role in the regulation of the cell cycle and the increased nucleolar activity that is associated with the cell proliferation. This Mus musculus (Mouse) protein is 28S rRNA (cytosine-C(5))-methyltransferase (Nop2).